The sequence spans 278 residues: Octanoyltransferase LipM (278 aa).

The region spanning 33–248 is the BPL/LPL catalytic domain; the sequence is GKIPPTIRFY…GFEKGLNVQL (216 aa). Catalysis depends on cysteine 150, which acts as the Acyl-thioester intermediate.

It belongs to the octanoyltransferase LipM family. In terms of assembly, monomer.

It carries out the reaction octanoyl-[ACP] + L-lysyl-[protein] = N(6)-octanoyl-L-lysyl-[protein] + holo-[ACP] + H(+). The protein operates within protein modification; protein lipoylation via endogenous pathway; protein N(6)-(lipoyl)lysine from octanoyl-[acyl-carrier-protein]. Its function is as follows. Catalyzes the transfer of endogenously produced octanoic acid from octanoyl-acyl-carrier-protein onto the lipoyl domain of GcvH, an intermediate carrier during protein lipoylation. The protein is Octanoyltransferase LipM of Anoxybacillus flavithermus (strain DSM 21510 / WK1).